A 382-amino-acid polypeptide reads, in one-letter code: tRNA (guanine(26)-N(2))-dimethyltransferase (382 aa).

Residues 4–373 (VEIIEGKARI…KNLDEIKECI (370 aa)) form the Trm1 methyltransferase domain. 3 residues coordinate S-adenosyl-L-methionine: Arg44, Arg69, and Asp87. Cys246, Cys249, Cys263, and Cys266 together coordinate Zn(2+).

It belongs to the class I-like SAM-binding methyltransferase superfamily. Trm1 family.

The enzyme catalyses guanosine(26) in tRNA + 2 S-adenosyl-L-methionine = N(2)-dimethylguanosine(26) in tRNA + 2 S-adenosyl-L-homocysteine + 2 H(+). In terms of biological role, dimethylates a single guanine residue at position 26 of a number of tRNAs using S-adenosyl-L-methionine as donor of the methyl groups. The protein is tRNA (guanine(26)-N(2))-dimethyltransferase of Sulfolobus acidocaldarius (strain ATCC 33909 / DSM 639 / JCM 8929 / NBRC 15157 / NCIMB 11770).